Reading from the N-terminus, the 32-residue chain is Dermaseptin-8 (32 aa).

Q32 bears the Glutamine amide mark.

In terms of tissue distribution, expressed by the skin glands.

It localises to the secreted. Functionally, antimicrobial peptide, active against the Gram-positive bacterium S.aureus, and the Gram-negative bacteriun E.coli. Has hemolytic activity at 432 uM. This Phyllomedusa tarsius (Brownbelly leaf frog) protein is Dermaseptin-8.